The following is a 311-amino-acid chain: DNA-directed RNA polymerase subunit alpha (311 aa).

Positions Met-1–Lys-227 are alpha N-terminal domain (alpha-NTD). Positions Ile-242–Lys-311 are alpha C-terminal domain (alpha-CTD).

Belongs to the RNA polymerase alpha chain family. In terms of assembly, in plastids the minimal PEP RNA polymerase catalytic core is composed of four subunits: alpha, beta, beta', and beta''. When a (nuclear-encoded) sigma factor is associated with the core the holoenzyme is formed, which can initiate transcription.

It localises to the plastid. Its subcellular location is the chloroplast. It catalyses the reaction RNA(n) + a ribonucleoside 5'-triphosphate = RNA(n+1) + diphosphate. DNA-dependent RNA polymerase catalyzes the transcription of DNA into RNA using the four ribonucleoside triphosphates as substrates. This chain is DNA-directed RNA polymerase subunit alpha, found in Phaeodactylum tricornutum (strain CCAP 1055/1).